The following is a 157-amino-acid chain: Ribosome maturation factor RimM (157 aa).

Residues 89-156 form the PRC barrel domain; sequence PGEYYHVDLI…DRLLIDPEFV (68 aa).

Belongs to the RimM family. As to quaternary structure, binds ribosomal protein uS19.

Its subcellular location is the cytoplasm. Functionally, an accessory protein needed during the final step in the assembly of 30S ribosomal subunit, possibly for assembly of the head region. Essential for efficient processing of 16S rRNA. May be needed both before and after RbfA during the maturation of 16S rRNA. It has affinity for free ribosomal 30S subunits but not for 70S ribosomes. This is Ribosome maturation factor RimM from Rhizorhabdus wittichii (strain DSM 6014 / CCUG 31198 / JCM 15750 / NBRC 105917 / EY 4224 / RW1) (Sphingomonas wittichii).